The chain runs to 67 residues: Beta-defensin 103A (67 aa).

Positions M1 to G22 are cleaved as a signal peptide. Disulfide bonds link C33–C62, C40–C55, and C45–C63.

It belongs to the beta-defensin family.

Its subcellular location is the secreted. Functionally, exhibits antimicrobial activity against Gram-positive and Gram-negative bacteria. In Gorilla gorilla gorilla (Western lowland gorilla), this protein is Beta-defensin 103A (DEFB103A).